Consider the following 336-residue polypeptide: Glycerol-3-phosphate dehydrogenase [NAD(P)+] (336 aa).

NADPH contacts are provided by W11, R33, and K105. Sn-glycerol 3-phosphate contacts are provided by K105, G141, and S143. A145 is a binding site for NADPH. Sn-glycerol 3-phosphate is bound by residues K196, D249, S259, R260, and N261. K196 (proton acceptor) is an active-site residue. R260 provides a ligand contact to NADPH. Residues V284 and E286 each coordinate NADPH.

The protein belongs to the NAD-dependent glycerol-3-phosphate dehydrogenase family.

It is found in the cytoplasm. The enzyme catalyses sn-glycerol 3-phosphate + NAD(+) = dihydroxyacetone phosphate + NADH + H(+). It carries out the reaction sn-glycerol 3-phosphate + NADP(+) = dihydroxyacetone phosphate + NADPH + H(+). The protein operates within membrane lipid metabolism; glycerophospholipid metabolism. Functionally, catalyzes the reduction of the glycolytic intermediate dihydroxyacetone phosphate (DHAP) to sn-glycerol 3-phosphate (G3P), the key precursor for phospholipid synthesis. The protein is Glycerol-3-phosphate dehydrogenase [NAD(P)+] of Delftia acidovorans (strain DSM 14801 / SPH-1).